Consider the following 342-residue polypeptide: Antihemorrhagic factor cHLP-B (342 aa).

An N-terminal signal peptide occupies residues 1–19; that stretch reads MNSLVALVLLGQMIGSTLS. Cystatin fetuin-A-type domains follow at residues 20–129 and 140–253; these read HHLQ…AKCH and RNCP…SDCV. Disulfide bonds link Cys28–Cys333, Cys85–Cys96, Cys110–Cys128, Cys142–Cys145, Cys204–Cys216, and Cys229–Cys252. Residue Asn95 is glycosylated (N-linked (GlcNAc...) asparagine). Asn203 carries N-linked (GlcNAc...) asparagine glycosylation. 2 N-linked (GlcNAc...) asparagine glycosylation sites follow: Asn281 and Asn292.

It belongs to the fetuin family. Homodimer. Expressed by the liver.

It is found in the secreted. Functionally, potent inhibitor of hemorrhagic activity but also proteolytic activities. Inhibition occurs by formation of a non-covalent complex between this protein and the proteinases at their metalloproteinase domains. This is Antihemorrhagic factor cHLP-B from Gloydius brevicauda (Korean slamosa snake).